The sequence spans 445 residues: METIFAQSSAFGKAGVAVFRISGPKSLEVLQLLTGKKAFKPRLMYYQQIIAPETKELIDNAMVVYFKLPNSFTGEDVVEIHTHGSKAISIMMINTLLNISDIRLAEAGEFTKRAFLNNKFDLTAAEGIADLINAETIMQHRQAIRQASGRLEELYNSWRSQLLKIISLLEAYIDFPDEDIPDSVLNDVNNTHKNLVNEISNYLNDNRRGELLNSGLKLAIVGPPNTGKSSLLNFLMQRDIAMVSNIAGTTRDIIEGHLDIGGYPIILQDTAGIREESSDIIEQEGIKRAINSAKTADIKIIMFDAKKLDSSINEDITGLIDENTIVIINKIDLIEPSKVFSIEDKYKCLRVSVKNNIALSSILKNIENIAENMAGFTETPYITNQRHRHYLKQALSHLTDFSLDNDLVLATEDIRITARCIGAITGVINVEEILGEIFQNFCIGK.

The (6S)-5-formyl-5,6,7,8-tetrahydrofolate site is built by R20, E79, and K119. The 157-residue stretch at 215-371 folds into the TrmE-type G domain; that stretch reads GLKLAIVGPP…ILKNIENIAE (157 aa). Residue N225 participates in K(+) binding. GTP-binding positions include 225–230, 244–250, and 269–272; these read NTGKSS, SNIAGTT, and DTAG. S229 contributes to the Mg(2+) binding site. Positions 244, 246, and 249 each coordinate K(+). T250 lines the Mg(2+) pocket. (6S)-5-formyl-5,6,7,8-tetrahydrofolate is bound at residue K445.

Belongs to the TRAFAC class TrmE-Era-EngA-EngB-Septin-like GTPase superfamily. TrmE GTPase family. Homodimer. Heterotetramer of two MnmE and two MnmG subunits. It depends on K(+) as a cofactor.

The protein resides in the cytoplasm. Exhibits a very high intrinsic GTPase hydrolysis rate. Involved in the addition of a carboxymethylaminomethyl (cmnm) group at the wobble position (U34) of certain tRNAs, forming tRNA-cmnm(5)s(2)U34. The protein is tRNA modification GTPase MnmE of Rickettsia akari (strain Hartford).